The chain runs to 355 residues: Fe-S cluster assembly protein DRE2 (355 aa).

The N-terminal SAM-like domain stretch occupies residues 23–156; the sequence is TSFNPRTLLL…KPDYSASVAV (134 aa). A linker region spans residues 157–247; that stretch reads PLRLRRKDNS…EDTLLTEEDM (91 aa). Positions 189–214 are disordered; it reads RKSVDMTDDVPEKDVPKVDSPKNDAP. A compositionally biased stretch (basic and acidic residues) spans 190-213; it reads KSVDMTDDVPEKDVPKVDSPKNDA. Positions 257, 268, 271, and 273 each coordinate [2Fe-2S] cluster. The tract at residues 257–273 is fe-S binding site A; the sequence is CAPRAGKRRRACKDCTC. Residues C318, C321, C329, and C332 each contribute to the [4Fe-4S] cluster site. 2 short sequence motifs (cx2C motif) span residues 318–321 and 329–332; these read CGNC and CDGC. The tract at residues 318–332 is fe-S binding site B; sequence CGNCSLGDAFRCDGC.

The protein belongs to the anamorsin family. Monomer. Interacts with TAH18. Interacts with MIA40. The cofactor is [2Fe-2S] cluster. It depends on [4Fe-4S] cluster as a cofactor.

It is found in the cytoplasm. It localises to the mitochondrion intermembrane space. Functionally, component of the cytosolic iron-sulfur (Fe-S) protein assembly (CIA) machinery required for the maturation of extramitochondrial Fe-S proteins. Part of an electron transfer chain functioning in an early step of cytosolic Fe-S biogenesis, facilitating the de novo assembly of a [4Fe-4S] cluster on the scaffold complex CFD1-NBP35. Electrons are transferred to DRE2 from NADPH via the FAD- and FMN-containing protein TAH18. TAH18-DRE2 are also required for the assembly of the diferric tyrosyl radical cofactor of ribonucleotide reductase (RNR), probably by providing electrons for reduction during radical cofactor maturation in the catalytic small subunit RNR2. This chain is Fe-S cluster assembly protein DRE2, found in Botryotinia fuckeliana (strain B05.10) (Noble rot fungus).